The primary structure comprises 234 residues: NGTCAWLRPDGKTQVTVEYQNDHGAMVPIRVHTILISTQHDETVTNDEIAADLKEHVIKPVVPENYLDEKTIFHLNPSGRFVIGGPHGDAGLTGRKIIIDTYGGWGAHGGGAFSGKDPTKVDRSGAYIVRQAAKSIVASGLARRCIVQVSYAIGVPEPLSVFVDTYGTGKIPDREILKIVKETFDFRPGMISINLDLKRGGNGRFLKTAAYGHFGREDPDFTWEVVKPLKWEKA.

Residues 10–12 (DGK), 78–81 (SGRF), Asp89, 95–96 (RK), Ala112, Lys116, and Lys120 contribute to the ATP site. Asp89 contributes to the L-methionine binding site. Residue Lys120 coordinates L-methionine.

This sequence belongs to the AdoMet synthase family. As to quaternary structure, homotetramer. The cofactor is Mn(2+). It depends on Mg(2+) as a cofactor. Co(2+) serves as cofactor. K(+) is required as a cofactor. As to expression, mainly in floral buds and roots.

It is found in the cytoplasm. It catalyses the reaction L-methionine + ATP + H2O = S-adenosyl-L-methionine + phosphate + diphosphate. It participates in amino-acid biosynthesis; S-adenosyl-L-methionine biosynthesis; S-adenosyl-L-methionine from L-methionine: step 1/1. Catalyzes the formation of S-adenosylmethionine from methionine and ATP. The reaction comprises two steps that are both catalyzed by the same enzyme: formation of S-adenosylmethionine (AdoMet) and triphosphate, and subsequent hydrolysis of the triphosphate. In Petroselinum crispum (Parsley), this protein is S-adenosylmethionine synthase 1 (SMS-1).